The following is a 124-amino-acid chain: uncharacterized protein (124 aa).

The interval 1–65 is disordered; sequence MAENSRYVRL…RPASSSNPDY (65 aa). Residues 37 to 47 are compositionally biased toward polar residues; the sequence is LNSNDAESQQV.

This is an uncharacterized protein from Microplitis demolitor (Parasitoid wasp).